The primary structure comprises 628 residues: Glutamyl-tRNA(Gln) amidotransferase subunit E (628 aa).

Belongs to the GatB/GatE family. GatE subfamily. Heterodimer of GatD and GatE.

It catalyses the reaction L-glutamyl-tRNA(Gln) + L-glutamine + ATP + H2O = L-glutaminyl-tRNA(Gln) + L-glutamate + ADP + phosphate + H(+). Allows the formation of correctly charged Gln-tRNA(Gln) through the transamidation of misacylated Glu-tRNA(Gln) in organisms which lack glutaminyl-tRNA synthetase. The reaction takes place in the presence of glutamine and ATP through an activated gamma-phospho-Glu-tRNA(Gln). The GatDE system is specific for glutamate and does not act on aspartate. This is Glutamyl-tRNA(Gln) amidotransferase subunit E from Sulfurisphaera tokodaii (strain DSM 16993 / JCM 10545 / NBRC 100140 / 7) (Sulfolobus tokodaii).